We begin with the raw amino-acid sequence, 644 residues long: Threonine--tRNA ligase (644 aa).

One can recognise a TGS domain in the interval 1–61 (MVAITLPDGS…AHDAKVEIVT (61 aa)). The tract at residues 242–533 (DHRKIGKALN…LIENYAGWMP (292 aa)) is catalytic. Residues cysteine 333, histidine 384, and histidine 510 each contribute to the Zn(2+) site.

Belongs to the class-II aminoacyl-tRNA synthetase family. Homodimer. It depends on Zn(2+) as a cofactor.

Its subcellular location is the cytoplasm. It catalyses the reaction tRNA(Thr) + L-threonine + ATP = L-threonyl-tRNA(Thr) + AMP + diphosphate + H(+). Its function is as follows. Catalyzes the attachment of threonine to tRNA(Thr) in a two-step reaction: L-threonine is first activated by ATP to form Thr-AMP and then transferred to the acceptor end of tRNA(Thr). Also edits incorrectly charged L-seryl-tRNA(Thr). In Psychrobacter cryohalolentis (strain ATCC BAA-1226 / DSM 17306 / VKM B-2378 / K5), this protein is Threonine--tRNA ligase.